Reading from the N-terminus, the 553-residue chain is General alpha-glucoside permease (553 aa).

The segment covering M1–S21 has biased composition (polar residues). A disordered region spans residues M1–E26. At M1–S33 the chain is on the cytoplasmic side. A helical transmembrane segment spans residues L34–L54. Topologically, residues G55 to S72 are extracellular. The chain crosses the membrane as a helical span at residues I73–S93. Topologically, residues D94–S111 are cytoplasmic. A helical transmembrane segment spans residues L112–F132. Over S133 to R140 the chain is Extracellular. Residues V141 to M161 traverse the membrane as a helical segment. Residues A162–R186 are Cytoplasmic-facing. Residues M187 to F207 traverse the membrane as a helical segment. The Extracellular portion of the chain corresponds to S208 to Q216. A helical transmembrane segment spans residues V217 to V237. The Cytoplasmic segment spans residues S238–Q280. A helical transmembrane segment spans residues F281–L301. Residues Y302–S322 are Extracellular-facing. The chain crosses the membrane as a helical span at residues F323–L343. Residues E344–L424 lie on the Cytoplasmic side of the membrane. The tract at residues N368–R399 is disordered. A compositionally biased stretch (polar residues) spans R374–R392. Residues P425–L445 form a helical membrane-spanning segment. The Extracellular portion of the chain corresponds to Q446–Q452. Residues A453–F473 traverse the membrane as a helical segment. Topologically, residues S474–N494 are cytoplasmic. The chain crosses the membrane as a helical span at residues V495–S515. Residues E516–D521 are Extracellular-facing. Residues I522–A542 traverse the membrane as a helical segment. Residues Y543–F553 are Cytoplasmic-facing.

The protein belongs to the glycoside-pentoside-hexuronide (GPH) cation symporter transporter (TC 2.A.2.4) family.

It is found in the membrane. Functionally, responsible for the transport of maltose and sucrose into the cell, with the concomitant uptake of protons (symport system). The protein is General alpha-glucoside permease (sut1) of Schizosaccharomyces pombe (strain 972 / ATCC 24843) (Fission yeast).